The sequence spans 225 residues: Holliday junction branch migration complex subunit RuvA (225 aa).

The interval 1–68 is domain I; it reads MIGWLQGQKV…DDGSSLFGFP (68 aa). The domain II stretch occupies residues 69 to 147; sequence ERRERDMFRT…EFSCRDPGMS (79 aa). The flexible linker stretch occupies residues 148 to 158; sequence LVDNGVIDSHQ. The segment at 159 to 225 is domain III; the sequence is LKDSSLHELQ…SLRWLSQEAA (67 aa).

This sequence belongs to the RuvA family. In terms of assembly, homotetramer. Forms an RuvA(8)-RuvB(12)-Holliday junction (HJ) complex. HJ DNA is sandwiched between 2 RuvA tetramers; dsDNA enters through RuvA and exits via RuvB. An RuvB hexamer assembles on each DNA strand where it exits the tetramer. Each RuvB hexamer is contacted by two RuvA subunits (via domain III) on 2 adjacent RuvB subunits; this complex drives branch migration. In the full resolvosome a probable DNA-RuvA(4)-RuvB(12)-RuvC(2) complex forms which resolves the HJ.

It localises to the cytoplasm. Functionally, the RuvA-RuvB-RuvC complex processes Holliday junction (HJ) DNA during genetic recombination and DNA repair, while the RuvA-RuvB complex plays an important role in the rescue of blocked DNA replication forks via replication fork reversal (RFR). RuvA specifically binds to HJ cruciform DNA, conferring on it an open structure. The RuvB hexamer acts as an ATP-dependent pump, pulling dsDNA into and through the RuvAB complex. HJ branch migration allows RuvC to scan DNA until it finds its consensus sequence, where it cleaves and resolves the cruciform DNA. This is Holliday junction branch migration complex subunit RuvA from Prochlorococcus marinus (strain MIT 9313).